We begin with the raw amino-acid sequence, 51 residues long: Insulin (51 aa).

Intrachain disulfides connect Cys-7–Cys-37, Cys-19–Cys-50, and Cys-36–Cys-41.

The protein belongs to the insulin family. As to quaternary structure, heterodimer of a B chain and an A chain linked by two disulfide bonds.

Its subcellular location is the secreted. In terms of biological role, insulin decreases blood glucose concentration. It increases cell permeability to monosaccharides, amino acids and fatty acids. It accelerates glycolysis, the pentose phosphate cycle, and glycogen synthesis in liver. The polypeptide is Insulin (ins) (Anguilla rostrata (American eel)).